A 535-amino-acid polypeptide reads, in one-letter code: T-complex protein 1 subunit beta (535 aa).

An N-acetylmethionine modification is found at M1. A2 carries the N-acetylalanine modification. S3 bears the Phosphoserine mark. K13 is subject to N6-acetyllysine. G44 is an ADP binding site. Residue G44 participates in ATP binding. S60 carries the phosphoserine modification. D97 contacts Mg(2+). The ADP site is built by G98, T99, T100, and S101. Positions 98, 99, and 100 each coordinate ATP. At K154 the chain carries N6-acetyllysine. 2 residues coordinate ADP: S168 and S169. K181 carries the N6-acetyllysine modification. K248 participates in a covalent cross-link: Glycyl lysine isopeptide (Lys-Gly) (interchain with G-Cter in SUMO2). S260 carries the post-translational modification Phosphoserine. T261 carries the post-translational modification Phosphothreonine. Positions 410, 495, and 500 each coordinate ADP. Positions 495 and 500 each coordinate ATP.

The protein belongs to the TCP-1 chaperonin family. In terms of assembly, component of the chaperonin-containing T-complex (TRiC), a hexadecamer composed of two identical back-to-back stacked rings enclosing a protein folding chamber. Each ring is made up of eight different subunits: TCP1/CCT1, CCT2, CCT3, CCT4, CCT5, CCT6A/CCT6, CCT7, CCT8. Interacts with PACRG. Interacts with FLCN. Interacts with DLEC1. Interacts with SVEP1.

It localises to the cytoplasm. The enzyme catalyses ATP + H2O = ADP + phosphate + H(+). In terms of biological role, component of the chaperonin-containing T-complex (TRiC), a molecular chaperone complex that assists the folding of actin, tubulin and other proteins upon ATP hydrolysis. The TRiC complex mediates the folding of WRAP53/TCAB1, thereby regulating telomere maintenance. As part of the TRiC complex may play a role in the assembly of BBSome, a complex involved in ciliogenesis regulating transports vesicles to the cilia. The polypeptide is T-complex protein 1 subunit beta (Homo sapiens (Human)).